A 103-amino-acid polypeptide reads, in one-letter code: Iron-sulfur cluster assembly protein CyaY (103 aa).

This sequence belongs to the frataxin family.

Its function is as follows. Involved in iron-sulfur (Fe-S) cluster assembly. May act as a regulator of Fe-S biogenesis. This Rickettsia africae (strain ESF-5) protein is Iron-sulfur cluster assembly protein CyaY.